Reading from the N-terminus, the 970-residue chain is Disks large 1 tumor suppressor protein (970 aa).

The L27 domain occupies 4-64 (KKQEAHRALE…FYELTLLDDS (61 aa)). The tract at residues 161–209 (TENAKEPTVEQQQKQQQAQQRSSRSPQQQNPQQQQGSKSRSGSQTVNGD) is disordered. The segment covering 171-204 (QQQKQQQAQQRSSRSPQQQNPQQQQGSKSRSGSQ) has biased composition (low complexity). PDZ domains are found at residues 216–303 (DIQL…KRKR) and 330–421 (EIDL…GKTQ). The interval 424–477 (TTSASGGGGGGLSSGQQLSQSQSQLATSQSQSQVHQQQHATPMVNSQSTEPGSR) is disordered. Residues 437 to 462 (SGQQLSQSQSQLATSQSQSQVHQQQH) show a composition bias toward low complexity. Over residues 466–477 (MVNSQSTEPGSR) the composition is skewed to polar residues. Serine 496 carries the phosphoserine modification. The PDZ 3 domain occupies 506–587 (TITIQKGPQG…VVTLLAQYRP (82 aa)). Residues 620 to 690 (KRSLYVRALF…PSKRRWERKM (71 aa)) enclose the SH3 domain. Threonine 714 carries the post-translational modification Phosphothreonine. The region spanning 780–955 (TRPVIILGPL…IYSKVKSMIW (176 aa)) is the Guanylate kinase-like domain.

This sequence belongs to the MAGUK family. In terms of tissue distribution, during the cellular blastoderm stage, isoform B, isoform F, isoform H, isoform I and isoform L expression is localized to the cell borders. From stage 11 onwards, expression is found predominantly in the developing nervous system: axon bundles in the ventral cord and the brain. Stage 14 and 15 embryos exhibit expression in the developing body wall muscle. Expression in neuropil regions of the CNS and at NMJs persists through to larval development. Other isoforms show expression in embryonic epithelial cells. In larvae, expression is seen as a belt around salivary glands, imaginal disks and proventriculus. Expressed in adult reproductive tissues. In epithelia, coexpressed with scrib throughout development.

It is found in the cytoplasm. It localises to the cell membrane. The protein localises to the basolateral cell membrane. The protein resides in the cytoskeleton. Its subcellular location is the cell junction. It is found in the septate junction. Functionally, during embryonic development, some isoforms are essential for proper neuronal differentiation and organization. Required for cell polarity; maintenance of apicobasal polarity. Plays a critical role at septate junctions in cellular growth control during larval development. The presence of a guanylate kinase domain suggests involvement in cellular adhesion as well as signal transduction to control cellular proliferation. This chain is Disks large 1 tumor suppressor protein (dlg1), found in Drosophila melanogaster (Fruit fly).